A 386-amino-acid polypeptide reads, in one-letter code: Patatin-06 (386 aa).

A signal peptide spans 1–23 (MATTKSFLILFFMILATTSSTCA). In terms of domain architecture, PNPLA spans 32–229 (LSIDGGGIKG…TVGDPALLSL (198 aa)). The short motif at 36–41 (GGGIKG) is the GXGXXG element. Residues 75 to 79 (GTSTG) carry the GXSXG motif. Serine 77 serves as the catalytic Nucleophile. Asparagine 115 carries N-linked (GlcNAc...) asparagine glycosylation. Aspartate 215 functions as the Proton acceptor in the catalytic mechanism. The short motif at 215-217 (DGG) is the DGA/G element. Residues 321 to 384 (ENALTGTTTE…NRKKLRANKA (64 aa)) are a coiled coil.

The protein belongs to the patatin family. Tuber.

It localises to the vacuole. Functionally, probable lipolytic acyl hydrolase (LAH), an activity which is thought to be involved in the response of tubers to pathogens. This is Patatin-06 from Solanum tuberosum (Potato).